We begin with the raw amino-acid sequence, 503 residues long: Cysteine desulfurase, mitochondrial (503 aa).

The transit peptide at 1-27 (MSNIAPQVLRHASRACSRRLSLSASLV) directs the protein to the mitochondrion. The span at 34–50 (RTVTGSGSGGRRYVSGS) shows a compositional bias: low complexity. Positions 34–58 (RTVTGSGSGGRRYVSGSQRHNAQAQ) are disordered. Residues 172-173 (AT), Asn254, Gln282, and 302-304 (SGH) contribute to the pyridoxal 5'-phosphate site. Lys305 carries the post-translational modification N6-(pyridoxal phosphate)lysine. Residue Thr342 coordinates pyridoxal 5'-phosphate. Cys427 (cysteine persulfide intermediate) is an active-site residue. Cys427 is a binding site for [2Fe-2S] cluster.

It belongs to the class-V pyridoxal-phosphate-dependent aminotransferase family. NifS/IscS subfamily. Requires pyridoxal 5'-phosphate as cofactor.

It localises to the mitochondrion. The enzyme catalyses (sulfur carrier)-H + L-cysteine = (sulfur carrier)-SH + L-alanine. In terms of biological role, catalyzes the removal of elemental sulfur from cysteine to produce alanine. It supplies the inorganic sulfur for iron-sulfur (Fe-S) clusters. Plays a role in both tRNA-processing and mitochondrial metabolism. Involved in the 2-thio-modification of both 5-carboxymethylaminomethyl-2-thiouridine in mitochondrial tRNAs and 5-methoxycarbonylmethyl-2-thiouridine (mcm5s2U) in cytoplasmic tRNAs. The polypeptide is Cysteine desulfurase, mitochondrial (Arthroderma benhamiae (strain ATCC MYA-4681 / CBS 112371) (Trichophyton mentagrophytes)).